Consider the following 141-residue polypeptide: Hemoglobin subunit alpha-3 (141 aa).

The 141-residue stretch at 1–141 folds into the Globin domain; sequence VLSPADKTNV…VSTVLTSKYR (141 aa). Residue histidine 58 coordinates O2. Histidine 87 provides a ligand contact to heme b.

It belongs to the globin family. Heterotetramer of two alpha chains and two beta chains. In terms of tissue distribution, red blood cells.

Its function is as follows. Involved in oxygen transport from the lung to the various peripheral tissues. This is Hemoglobin subunit alpha-3 from Pan troglodytes (Chimpanzee).